The chain runs to 514 residues: AAA-ATPase ASD, mitochondrial (514 aa).

A helical membrane pass occupies residues 7–24 (VWTNTGSALASLVFIYTI). 250 to 257 (GPPGTGKS) lines the ATP pocket. 2 disordered regions span residues 311–342 (GQRKQKKDEEEDEDETSPIEKQMKKDQGENKG) and 467–514 (KEEA…TMKD). 2 stretches are compositionally biased toward basic and acidic residues: residues 331 to 342 (KQMKKDQGENKG) and 467 to 502 (KEEAKRRIEDEEKKKKEEEEIKRKKREEKKIKKEEK).

The protein belongs to the AAA ATPase family. BCS1 subfamily. Mg(2+) serves as cofactor. In terms of tissue distribution, expressed in seeds, specifically in the embryo.

The protein localises to the mitochondrion membrane. It catalyses the reaction ATP + H2O = ADP + phosphate + H(+). Required to regulate morphology and anatomy during seed maturation. The polypeptide is AAA-ATPase ASD, mitochondrial (AATP1) (Arabidopsis thaliana (Mouse-ear cress)).